Here is a 465-residue protein sequence, read N- to C-terminus: Argininosuccinate lyase (465 aa).

This sequence belongs to the lyase 1 family. Argininosuccinate lyase subfamily.

Its subcellular location is the cytoplasm. The catalysed reaction is 2-(N(omega)-L-arginino)succinate = fumarate + L-arginine. The protein operates within amino-acid biosynthesis; L-arginine biosynthesis; L-arginine from L-ornithine and carbamoyl phosphate: step 3/3. The polypeptide is Argininosuccinate lyase (Halorhodospira halophila (strain DSM 244 / SL1) (Ectothiorhodospira halophila (strain DSM 244 / SL1))).